The following is a 245-amino-acid chain: Carboxymethylenebutenolidase homolog (245 aa).

Position 2 is an N-acetylalanine (Ala-2). The residue at position 36 (Lys-36) is an N6-acetyllysine. Catalysis depends on residues Cys-132, Asp-179, and His-212. Ser-223 is subject to Phosphoserine.

The protein belongs to the dienelactone hydrolase family. In terms of tissue distribution, widely expressed, with highest levels in liver, followed by kidney, small intestine and colon. Present in liver and intestine (at protein level).

Its subcellular location is the cytoplasm. It localises to the cytosol. With respect to regulation, strongly inhibited by p-chloromercuribenzoate (PCMB). Partially inhibited by bis-p-nitrophenylphosphate (BNPP). Not inhibited by DFP, PMSF, eserine or EDTA. Functionally, cysteine hydrolase. Can convert the prodrug olmesartan medoxomil into its pharmacologically active metabolite olmerstatan, an angiotensin receptor blocker, in liver and intestine. May also activate beta-lactam antibiotics faropenem medoxomil and lenampicillin. This is Carboxymethylenebutenolidase homolog (CMBL) from Homo sapiens (Human).